Consider the following 337-residue polypeptide: Pantothenate synthetase (337 aa).

31–38 (MGALHEGH) provides a ligand contact to ATP. The active-site Proton donor is H38. Q65 serves as a coordination point for (R)-pantoate. Beta-alanine is bound at residue Q65. Position 152–155 (152–155 (GQKD)) interacts with ATP. Q158 is a (R)-pantoate binding site. Residues V181 and 189 to 192 (LSSR) contribute to the ATP site.

Belongs to the pantothenate synthetase family. As to quaternary structure, homodimer.

Its subcellular location is the cytoplasm. It carries out the reaction (R)-pantoate + beta-alanine + ATP = (R)-pantothenate + AMP + diphosphate + H(+). It participates in cofactor biosynthesis; (R)-pantothenate biosynthesis; (R)-pantothenate from (R)-pantoate and beta-alanine: step 1/1. Its function is as follows. Catalyzes the condensation of pantoate with beta-alanine in an ATP-dependent reaction via a pantoyl-adenylate intermediate. The polypeptide is Pantothenate synthetase (Streptomyces coelicolor (strain ATCC BAA-471 / A3(2) / M145)).